The following is a 104-amino-acid chain: UPF0235 protein Sfri_2863 (104 aa).

The protein belongs to the UPF0235 family.

The chain is UPF0235 protein Sfri_2863 from Shewanella frigidimarina (strain NCIMB 400).